Consider the following 124-residue polypeptide: Large ribosomal subunit protein bL17 (124 aa).

This sequence belongs to the bacterial ribosomal protein bL17 family. Part of the 50S ribosomal subunit. Contacts protein L32.

This Acidithiobacillus ferrooxidans (strain ATCC 23270 / DSM 14882 / CIP 104768 / NCIMB 8455) (Ferrobacillus ferrooxidans (strain ATCC 23270)) protein is Large ribosomal subunit protein bL17.